The following is a 320-amino-acid chain: Ferrochelatase (320 aa).

2 residues coordinate Fe cation: H194 and E275.

The protein belongs to the ferrochelatase family. As to quaternary structure, monomer.

The protein localises to the cytoplasm. The catalysed reaction is heme b + 2 H(+) = protoporphyrin IX + Fe(2+). It functions in the pathway porphyrin-containing compound metabolism; protoheme biosynthesis; protoheme from protoporphyrin-IX: step 1/1. In terms of biological role, catalyzes the ferrous insertion into protoporphyrin IX. This chain is Ferrochelatase, found in Escherichia coli O8 (strain IAI1).